We begin with the raw amino-acid sequence, 125 residues long: U-scoloptoxin(05)-Sm1a (125 aa).

Positions 1–20 are cleaved as a signal peptide; sequence MNVLYTKIFFILILTRTSSA.

The protein belongs to the scoloptoxin-05 family. Contains 4 disulfide bonds. As to expression, expressed by the venom gland.

Its subcellular location is the secreted. This is U-scoloptoxin(05)-Sm1a from Scolopendra morsitans (Tanzanian blue ringleg centipede).